We begin with the raw amino-acid sequence, 177 residues long: Cytochrome c-type biogenesis protein CcmE (177 aa).

Residues 1 to 8 (MNPRRKSR) lie on the Cytoplasmic side of the membrane. Residues 9 to 29 (LKVVMAVLSGLAVAVGLTLYA) form a helical; Signal-anchor for type II membrane protein membrane-spanning segment. Residues 30-177 (LSQNIDLFYT…QISQPFGENK (148 aa)) lie on the Periplasmic side of the membrane. 2 residues coordinate heme: H131 and Y135. Residues 134-177 (NYMPPELGDQMKKQHQPMGISEADLKGKSERDATQISQPFGENK) form a disordered region. The segment covering 156 to 166 (ADLKGKSERDA) has biased composition (basic and acidic residues). Polar residues predominate over residues 167 to 177 (TQISQPFGENK).

This sequence belongs to the CcmE/CycJ family.

The protein resides in the cell inner membrane. In terms of biological role, heme chaperone required for the biogenesis of c-type cytochromes. Transiently binds heme delivered by CcmC and transfers the heme to apo-cytochromes in a process facilitated by CcmF and CcmH. The polypeptide is Cytochrome c-type biogenesis protein CcmE (Glaesserella parasuis serovar 5 (strain SH0165) (Haemophilus parasuis)).